The chain runs to 56 residues: Large ribosomal subunit protein bL32 (56 aa).

Residues 1–35 are disordered; that stretch reads MAVQQNKSTRSKRGMRRSHHALRSVTISVDRTSGE. The span at 9-22 shows a compositional bias: basic residues; that stretch reads TRSKRGMRRSHHAL.

The protein belongs to the bacterial ribosomal protein bL32 family.

The chain is Large ribosomal subunit protein bL32 from Blochmanniella pennsylvanica (strain BPEN).